The primary structure comprises 62 residues: Light-harvesting protein B-870 alpha chain (62 aa).

At Met1 the chain carries N-formylmethionine. The Cytoplasmic segment spans residues 1–12 (MWRIWQLFDPRQ). The chain crosses the membrane as a helical span at residues 13–33 (ALVGLATFLFVLALLIHFILL). His29 contributes to the a bacteriochlorophyll binding site. Residues 34-52 (STERFNWLEGASTKPVQTS) are Periplasmic-facing. A propeptide spanning residues 53-62 (MVMPSSDLAV) is cleaved from the precursor.

It belongs to the antenna complex alpha subunit family. The core complex is formed by different alpha and beta chains, binding bacteriochlorophyll molecules, and arranged most probably in tetrameric structures disposed around the reaction center. The non-pigmented gamma chains may constitute additional components.

Its subcellular location is the cell inner membrane. In terms of biological role, antenna complexes are light-harvesting systems, which transfer the excitation energy to the reaction centers. The protein is Light-harvesting protein B-870 alpha chain of Rhodospirillum rubrum.